We begin with the raw amino-acid sequence, 90 residues long: Protein LIM3 (90 aa).

Positions 1–26 (MAAVKFLVCSVLLVVLATQSEIGLAQ) are cleaved as a signal peptide. Intrachain disulfides connect cysteine 28/cysteine 65, cysteine 38/cysteine 54, cysteine 55/cysteine 80, and cysteine 67/cysteine 87.

This sequence belongs to the A9/FIL1 family.

It localises to the secreted. The protein is Protein LIM3 (LIM3) of Lilium longiflorum (Trumpet lily).